The primary structure comprises 131 residues: ER membrane protein complex subunit 5 (131 aa).

Over 1–3 the chain is Cytoplasmic; it reads MAP. Residues 4 to 22 traverse the membrane as a helical segment; it reads SLWKGLVGIGLFALAHAAL. Over 23-43 the chain is Lumenal; sequence SAAQHRSYMRLTEKEDESLPI. Residues 44-63 traverse the membrane as a helical segment; the sequence is DIVLQTLLAFAVTCYGIVHI. Residues 64–131 are Cytoplasmic-facing; that stretch reads AGEFKDMDAT…KLRKLESLRR (68 aa). The residue at position 120 (Ser-120) is a Phosphoserine.

The protein belongs to the membrane magnesium transporter (TC 1.A.67) family. As to quaternary structure, component of the ER membrane protein complex (EMC).

The protein resides in the endoplasmic reticulum membrane. The protein localises to the golgi apparatus membrane. It localises to the early endosome membrane. In terms of biological role, part of the endoplasmic reticulum membrane protein complex (EMC) that enables the energy-independent insertion into endoplasmic reticulum membranes of newly synthesized membrane proteins. Preferentially accommodates proteins with transmembrane domains that are weakly hydrophobic or contain destabilizing features such as charged and aromatic residues. Involved in the cotranslational insertion of multi-pass membrane proteins in which stop-transfer membrane-anchor sequences become ER membrane spanning helices. It is also required for the post-translational insertion of tail-anchored/TA proteins in endoplasmic reticulum membranes. By mediating the proper cotranslational insertion of N-terminal transmembrane domains in an N-exo topology, with translocated N-terminus in the lumen of the ER, controls the topology of multi-pass membrane proteins like the G protein-coupled receptors. By regulating the insertion of various proteins in membranes, it is indirectly involved in many cellular processes. May be involved in Mg(2+) transport. In Pongo abelii (Sumatran orangutan), this protein is ER membrane protein complex subunit 5.